The sequence spans 159 residues: Cathelicidin-5 (159 aa).

The N-terminal stretch at 1 to 29 (METQRASLSLGRWSLWLLLLGLALPSASA) is a signal peptide. Q30 carries the post-translational modification Pyrrolidone carboxylic acid. A propeptide spanning residues 30-131 (QALSYREAVL…DITCAVPQSV (102 aa)) is cleaved from the precursor. Cystine bridges form between C86-C97 and C108-C125.

It belongs to the cathelicidin family.

It localises to the secreted. In terms of biological role, exerts a potent antimicrobial activity against Gram-negative and Gram-positive bacteria, including methicillin-resistant Staphylococcus aureus, and fungi. The polypeptide is Cathelicidin-5 (CATHL5) (Bos taurus (Bovine)).